The primary structure comprises 177 residues: Large ribosomal subunit protein bL9 (177 aa).

Residues 151–177 (VEEEPAEEVEAPAETEVAEDAEEATEA) form a disordered region.

It belongs to the bacterial ribosomal protein bL9 family.

Binds to the 23S rRNA. The polypeptide is Large ribosomal subunit protein bL9 (Maridesulfovibrio salexigens (strain ATCC 14822 / DSM 2638 / NCIMB 8403 / VKM B-1763) (Desulfovibrio salexigens)).